The primary structure comprises 311 residues: Porphobilinogen deaminase (311 aa).

An S-(dipyrrolylmethanemethyl)cysteine modification is found at C245.

Belongs to the HMBS family. In terms of assembly, monomer. The cofactor is dipyrromethane.

The catalysed reaction is 4 porphobilinogen + H2O = hydroxymethylbilane + 4 NH4(+). The protein operates within porphyrin-containing compound metabolism; protoporphyrin-IX biosynthesis; coproporphyrinogen-III from 5-aminolevulinate: step 2/4. Its function is as follows. Tetrapolymerization of the monopyrrole PBG into the hydroxymethylbilane pre-uroporphyrinogen in several discrete steps. The protein is Porphobilinogen deaminase of Deinococcus deserti (strain DSM 17065 / CIP 109153 / LMG 22923 / VCD115).